Consider the following 519-residue polypeptide: Chaperone SurA (519 aa).

The first 31 residues, 1–31 (MMRSLHSLRRMSGTVLALMLAAGLPLSAAQA), serve as a signal peptide directing secretion. Low complexity-rich tracts occupy residues 31–45 (AQPA…QKPA) and 197–207 (PAAAQATRAPA). 2 disordered regions span residues 31-50 (AQPA…PAPS) and 196-221 (NPAA…PAQS). Residues 223-324 (PAMLVLAQIL…NGFHILKVVD (102 aa)) form the PpiC 1 domain. The interval 328–361 (GGQPAQAARPAPAPAPQQPSSFQEGPSVAAPQGP) is disordered. The PpiC 2 domain maps to 364–463 (VTQTHARHIL…FGWHLIQVLE (100 aa)).

The protein localises to the periplasm. The catalysed reaction is [protein]-peptidylproline (omega=180) = [protein]-peptidylproline (omega=0). Its function is as follows. Chaperone involved in the correct folding and assembly of outer membrane proteins. Recognizes specific patterns of aromatic residues and the orientation of their side chains, which are found more frequently in integral outer membrane proteins. May act in both early periplasmic and late outer membrane-associated steps of protein maturation. The chain is Chaperone SurA from Bordetella pertussis (strain Tohama I / ATCC BAA-589 / NCTC 13251).